The chain runs to 405 residues: MAGVLGMILAGGEGSRLRPLTESRSKPAVPFGGSYRLIDFALNNFVNADLMRIYVLTQFKSQSLFHHMKKGWNINGITDRFIDPIPAQMRTGKRWYEGTADAIYQNLRFMELSEPEQVCIFGSDHIYKMDIKQMLSFHKEKLAALTVSALRMPLAEASQFGVIEVDAEGRMVGFEEKPSAPKSIPGDPDFALVSMGNYIFEADVLFAELIEDADNENSSHDFGKDIIPKMFPRGDVFVYDFSQNRISGEKAEVYWRDVGTIDAYWQAHMDLLKTDAPFSLYNRKWPLHTYQPPLPPATFTDSDNGRVQIIDSLVCNGSYVRGSRIEKSVLGFRSNIASACDISESILLGDVKVGEGCVLRRVIVDKDVDIAPGTQIGVNLQEDKKIFHVSDDGIVVIPKGARVGY.

Residues tyrosine 96, glycine 161, glutamate 176–lysine 177, and serine 194 each bind alpha-D-glucose 1-phosphate.

Belongs to the bacterial/plant glucose-1-phosphate adenylyltransferase family. In terms of assembly, homotetramer.

It catalyses the reaction alpha-D-glucose 1-phosphate + ATP + H(+) = ADP-alpha-D-glucose + diphosphate. Its pathway is glycan biosynthesis; glycogen biosynthesis. Involved in the biosynthesis of ADP-glucose, a building block required for the elongation reactions to produce glycogen. Catalyzes the reaction between ATP and alpha-D-glucose 1-phosphate (G1P) to produce pyrophosphate and ADP-Glc. The sequence is that of Glucose-1-phosphate adenylyltransferase 1 from Vibrio vulnificus (strain CMCP6).